The primary structure comprises 156 residues: Arginine repressor (156 aa).

This sequence belongs to the ArgR family.

The protein resides in the cytoplasm. It functions in the pathway amino-acid biosynthesis; L-arginine biosynthesis [regulation]. Regulates arginine biosynthesis genes. In Pectobacterium atrosepticum (strain SCRI 1043 / ATCC BAA-672) (Erwinia carotovora subsp. atroseptica), this protein is Arginine repressor.